Reading from the N-terminus, the 126-residue chain is Protein ApaG (126 aa).

Residues 2–126 enclose the ApaG domain; sequence NQRLSPIKVE…FSLAVPGLLH (125 aa).

In Shewanella piezotolerans (strain WP3 / JCM 13877), this protein is Protein ApaG.